Reading from the N-terminus, the 330-residue chain is Mas-related G-protein coupled receptor member B8 (330 aa).

Residues 1-33 (MDSSFPDWNIEFREQNESYFMESSSCDMSLAMS) are Extracellular-facing. The N-linked (GlcNAc...) asparagine glycan is linked to Asn-16. The chain crosses the membrane as a helical span at residues 34–54 (LLSIIIAIIGLTGNVIVLQLL). The Cytoplasmic segment spans residues 55–62 (GFHMHRNA). Residues 63-83 (FSVYIFNLSGANFLFLCTHIV) form a helical membrane-spanning segment. The Extracellular portion of the chain corresponds to 84–101 (FSLENLIRQFHYIDIHMA). A helical membrane pass occupies residues 102–122 (LFSVNVTILAYLAGVSMITAI). Topologically, residues 123-146 (SVEYWLSVLWPTWYHAQRPKHTST) are cytoplasmic. A helical membrane pass occupies residues 147–167 (VICTLLWVFSLLLTLWNWIIC). Residues 168–177 (KVLDYIYNWD) are Extracellular-facing. Residues 178–198 (MCWKLALIIVVWLLVLFVVLS) traverse the membrane as a helical segment. Residues 199-219 (RSNQALLFRVFCGSQQTPVTR) lie on the Cytoplasmic side of the membrane. Residues 220–240 (LLVTIMLTALVVLICGFGIGI) traverse the membrane as a helical segment. Residues 241-260 (CFFYWKKEENSIMPCGYFYE) are Extracellular-facing. Residues 261-281 (TILLLSGVNSCANPIICLFVG) traverse the membrane as a helical segment. At 282–330 (SIKHCQFQCGTLRLILQRAIQESPEEEDEEVEEVVEQEGGEEDEESTTL) the chain is on the cytoplasmic side. A disordered region spans residues 302–330 (QESPEEEDEEVEEVVEQEGGEEDEESTTL). The segment covering 304–330 (SPEEEDEEVEEVVEQEGGEEDEESTTL) has biased composition (acidic residues).

The protein belongs to the G-protein coupled receptor 1 family. Mas subfamily.

The protein localises to the membrane. Orphan receptor. Probably involved in the function of nociceptive neurons. May regulate nociceptor function and/or development, including the sensation or modulation of pain. This chain is Mas-related G-protein coupled receptor member B8 (Mrgprb8), found in Mus musculus (Mouse).